A 148-amino-acid chain; its full sequence is uncharacterized protein (148 aa).

The ABC transmembrane type-1 domain maps to 25–148 (LSIGLIFSLI…YSITNIFIYN (124 aa)). 3 helical membrane passes run 26–46 (SIGLIFSLIGTSFSLYIPLII), 60–80 (IVIIIICFGLTLIFSGVSTYI), and 127–147 (ITRVFSVEFIFSYSITNIFIY).

It localises to the cell membrane. This is an uncharacterized protein from Staphylococcus epidermidis.